The following is a 217-amino-acid chain: Homeobox protein Hox-B7 (217 aa).

The short motif at 126-131 is the Antp-type hexapeptide element; sequence IYPWMR. Residues 137–196 constitute a DNA-binding region (homeobox); that stretch reads RKRGRQTYTRYQTLELEKEFHYNRYLTRRRRIEIAHTLCLTERQIKIWFQNRRMKWKKEN. Residues 194–217 are disordered; the sequence is KENKTAGPGTTGQDRAEAEEEEEE.

This sequence belongs to the Antp homeobox family. Forms a DNA-binding heterodimer with transcription factor PBX1.

It localises to the nucleus. Functionally, sequence-specific transcription factor which is part of a developmental regulatory system that provides cells with specific positional identities on the anterior-posterior axis. This Homo sapiens (Human) protein is Homeobox protein Hox-B7 (HOXB7).